A 193-amino-acid polypeptide reads, in one-letter code: Ion-translocating oxidoreductase complex subunit A (193 aa).

Transmembrane regions (helical) follow at residues 5-25 (ILLI…FLGL), 39-59 (IGMG…AYLV), 72-92 (LRTL…EMVI), 102-122 (LLGI…VALL), 134-154 (VIYG…FAAL), and 171-191 (SIAL…SGLV).

This sequence belongs to the NqrDE/RnfAE family. The complex is composed of six subunits: RnfA, RnfB, RnfC, RnfD, RnfE and RnfG.

The protein resides in the cell inner membrane. Part of a membrane-bound complex that couples electron transfer with translocation of ions across the membrane. The chain is Ion-translocating oxidoreductase complex subunit A from Histophilus somni (strain 129Pt) (Haemophilus somnus).